The primary structure comprises 147 residues: Hemoglobin subunit delta (147 aa).

The 145-residue stretch at 3–147 folds into the Globin domain; the sequence is HLTPDEKNAV…VATALAHKYH (145 aa). Residue S51 is modified to Phosphoserine. 2 residues coordinate heme b: H64 and H93.

It belongs to the globin family. In terms of assembly, heterotetramer of two delta chains and two alpha chains. As to expression, red blood cells.

This Otolemur crassicaudatus (Brown greater galago) protein is Hemoglobin subunit delta (HBD).